Reading from the N-terminus, the 227-residue chain is tRNA (guanine-N(1)-)-methyltransferase (227 aa).

S-adenosyl-L-methionine contacts are provided by residues G111 and 135–140 (LGDYVL).

Belongs to the RNA methyltransferase TrmD family. Homodimer.

It is found in the cytoplasm. The enzyme catalyses guanosine(37) in tRNA + S-adenosyl-L-methionine = N(1)-methylguanosine(37) in tRNA + S-adenosyl-L-homocysteine + H(+). Specifically methylates guanosine-37 in various tRNAs. This chain is tRNA (guanine-N(1)-)-methyltransferase, found in Leifsonia xyli subsp. xyli (strain CTCB07).